The chain runs to 334 residues: Galactosylgalactosylxylosylprotein 3-beta-glucuronosyltransferase 1 (334 aa).

The Cytoplasmic portion of the chain corresponds to 1-6; that stretch reads MPKRRD. The tract at residues 3-5 is essential for transport from endoplasmic reticulum to Golgi apparatus and interaction with SAR1A; that stretch reads KRR. A helical; Signal-anchor for type II membrane protein membrane pass occupies residues 7–27; it reads ILAIVLIVLPWTLLITVWHQS. Residues 28-334 lie on the Lumenal side of the membrane; sequence TLAPLLAVHK…KGFTDPSVEI (307 aa). The segment at 37-56 is disordered; that stretch reads KDEGSDPRRETPPGADPREY. UDP-alpha-D-glucuronate is bound at residue 91-93; the sequence is PTY. A phosphothreonine mark is found at T103 and T108. D122 lines the UDP-alpha-D-glucuronate pocket. N140 carries an N-linked (GlcNAc...) asparagine glycan. The UDP-alpha-D-glucuronate site is built by R165 and R170. N184 carries N-linked (GlcNAc...) asparagine glycosylation. 195-197 lines the UDP-alpha-D-glucuronate pocket; the sequence is DDD. D197 contributes to the Mn(2+) binding site. Residues 245–254 are interaction with galactose moiety of substrate glycoprotein; that stretch reads FDPHRPFAID. The Proton donor/acceptor role is filled by E284. Residue N303 is glycosylated (N-linked (GlcNAc...) asparagine). 311 to 313 provides a ligand contact to UDP-alpha-D-glucuronate; that stretch reads HTR.

Belongs to the glycosyltransferase 43 family. Homodimer. Interacts with SAR1A. Mn(2+) serves as cofactor. The soluble form derives from the membrane form by proteolytic processing. As to expression, mainly expressed in the brain.

It localises to the golgi apparatus membrane. Its subcellular location is the secreted. The protein resides in the endoplasmic reticulum membrane. The enzyme catalyses 3-O-(beta-D-galactosyl-(1-&gt;3)-beta-D-galactosyl-(1-&gt;4)-beta-D-xylosyl)-L-seryl-[protein] + UDP-alpha-D-glucuronate = 3-O-(beta-D-GlcA-(1-&gt;3)-beta-D-Gal-(1-&gt;3)-beta-D-Gal-(1-&gt;4)-beta-D-Xyl)-L-seryl-[protein] + UDP + H(+). Its pathway is protein modification; protein glycosylation. In terms of biological role, involved in the biosynthesis of L2/HNK-1 carbohydrate epitope on glycoproteins. Can also play a role in glycosaminoglycan biosynthesis. Substrates include asialo-orosomucoid (ASOR), asialo-fetuin, and asialo-neural cell adhesion molecule. Requires sphingomyelin for activity: stearoyl-sphingomyelin was the most effective, followed by palmitoyl-sphingomyelin and lignoceroyl-sphingomyelin. Activity was demonstrated only for sphingomyelin with a saturated fatty acid and not for that with an unsaturated fatty acid, regardless of the length of the acyl group. In Homo sapiens (Human), this protein is Galactosylgalactosylxylosylprotein 3-beta-glucuronosyltransferase 1.